The following is a 72-amino-acid chain: Small proline-rich protein 2E (72 aa).

A compositionally biased stretch (low complexity) spans 1–11 (MSYQQQQCKQP). The disordered stretch occupies residues 1–20 (MSYQQQQCKQPCQPPPVCPT). A run of 3 repeats spans residues 21–29 (PKCPEPCPP), 30–38 (PKCPEPCPP), and 39–47 (PKCPQPCPP). A 3 X 9 AA tandem repeats of P-K-C-P-[EQ]-P-C-P-P region spans residues 21–47 (PKCPEPCPPPKCPEPCPPPKCPQPCPP). A disordered region spans residues 42 to 72 (PQPCPPQQCQQKCPPVTPSPPCQPKCPPKSK). The span at 56 to 72 (PVTPSPPCQPKCPPKSK) shows a compositional bias: pro residues.

Belongs to the cornifin (SPRR) family.

It is found in the cytoplasm. Its function is as follows. Cross-linked envelope protein of keratinocytes. It is a keratinocyte protein that first appears in the cell cytosol, but ultimately becomes cross-linked to membrane proteins by transglutaminase. All that results in the formation of an insoluble envelope beneath the plasma membrane. This Homo sapiens (Human) protein is Small proline-rich protein 2E (SPRR2E).